The chain runs to 160 residues: SsrA-binding protein (160 aa).

It belongs to the SmpB family.

Its subcellular location is the cytoplasm. Functionally, required for rescue of stalled ribosomes mediated by trans-translation. Binds to transfer-messenger RNA (tmRNA), required for stable association of tmRNA with ribosomes. tmRNA and SmpB together mimic tRNA shape, replacing the anticodon stem-loop with SmpB. tmRNA is encoded by the ssrA gene; the 2 termini fold to resemble tRNA(Ala) and it encodes a 'tag peptide', a short internal open reading frame. During trans-translation Ala-aminoacylated tmRNA acts like a tRNA, entering the A-site of stalled ribosomes, displacing the stalled mRNA. The ribosome then switches to translate the ORF on the tmRNA; the nascent peptide is terminated with the 'tag peptide' encoded by the tmRNA and targeted for degradation. The ribosome is freed to recommence translation, which seems to be the essential function of trans-translation. In Actinobacillus succinogenes (strain ATCC 55618 / DSM 22257 / CCUG 43843 / 130Z), this protein is SsrA-binding protein.